The following is a 135-amino-acid chain: Transcription antitermination protein NusB (135 aa).

A disordered region spans residues 115 to 135 (ATPAESTGRGSAVDSIPGQPS).

The protein belongs to the NusB family.

Functionally, involved in transcription antitermination. Required for transcription of ribosomal RNA (rRNA) genes. Binds specifically to the boxA antiterminator sequence of the ribosomal RNA (rrn) operons. In Frankia casuarinae (strain DSM 45818 / CECT 9043 / HFP020203 / CcI3), this protein is Transcription antitermination protein NusB.